An 843-amino-acid chain; its full sequence is Protein P (843 aa).

The tract at residues 1 to 177 is terminal protein domain (TP); the sequence is MPLSYPHFRK…FCGSQYSWEQ (177 aa). A spacer region spans residues 178–346; that stretch reads ELQHGSTSLN…YCLSHIINLL (169 aa). Disordered stretches follow at residues 228–255 and 284–314; these read KQGQ…RWPA and EANP…SVGS. The segment covering 239–249 has biased composition (basic residues); that stretch reads RSGRLRSRVHT. Residues 347 to 690 are polymerase/reverse transcriptase domain (RT); sequence EDWGPCYEHG…YMNLYPVARQ (344 aa). The region spanning 357-600 is the Reverse transcriptase domain; sequence EHHIRTPRTP…YNLHFMGYVI (244 aa). Residues Asp429, Asp551, and Asp552 each contribute to the Mg(2+) site.

The protein belongs to the hepadnaviridae P protein family.

It carries out the reaction DNA(n) + a 2'-deoxyribonucleoside 5'-triphosphate = DNA(n+1) + diphosphate. The enzyme catalyses Endonucleolytic cleavage to 5'-phosphomonoester.. Its activity is regulated as follows. Activated by host HSP70 and HSP40 in vitro to be able to bind the epsilon loop of the pgRNA. Because deletion of the RNase H region renders the protein partly chaperone-independent, the chaperones may be needed indirectly to relieve occlusion of the RNA-binding site by this domain. Inhibited by several reverse-transcriptase inhibitors: Lamivudine, Adefovir and Entecavir. Its function is as follows. Multifunctional enzyme that converts the viral RNA genome into dsDNA in viral cytoplasmic capsids. This enzyme displays a DNA polymerase activity that can copy either DNA or RNA templates, and a ribonuclease H (RNase H) activity that cleaves the RNA strand of RNA-DNA heteroduplexes in a partially processive 3'- to 5'-endonucleasic mode. Neo-synthesized pregenomic RNA (pgRNA) are encapsidated together with the P protein, and reverse-transcribed inside the nucleocapsid. Initiation of reverse-transcription occurs first by binding the epsilon loop on the pgRNA genome, and is initiated by protein priming, thereby the 5'-end of (-)DNA is covalently linked to P protein. Partial (+)DNA is synthesized from the (-)DNA template and generates the relaxed circular DNA (RC-DNA) genome. After budding and infection, the RC-DNA migrates in the nucleus, and is converted into a plasmid-like covalently closed circular DNA (cccDNA). The activity of P protein does not seem to be necessary for cccDNA generation, and is presumably released from (+)DNA by host nuclear DNA repair machinery. This chain is Protein P, found in Hepatitis B virus genotype F2 subtype adw4q (isolate Senegal/9203) (HBV-F).